The primary structure comprises 151 residues: UPF0178 protein PSHAb0045 (151 aa).

Belongs to the UPF0178 family.

This chain is UPF0178 protein PSHAb0045, found in Pseudoalteromonas translucida (strain TAC 125).